A 328-amino-acid chain; its full sequence is Octanoyltransferase, mitochondrial (328 aa).

The region spanning 108-312 is the BPL/LPL catalytic domain; it reads MKPNPIILTF…EMTKLLGIKT (205 aa). Residues 162-169, 241-243, and 254-256 contribute to the substrate site; these read RGGQVTFH, SVG, and GVA. Residue cysteine 272 is the Acyl-thioester intermediate of the active site.

Belongs to the LipB family.

The protein resides in the mitochondrion. It carries out the reaction octanoyl-[ACP] + L-lysyl-[protein] = N(6)-octanoyl-L-lysyl-[protein] + holo-[ACP] + H(+). It functions in the pathway protein modification; protein lipoylation via endogenous pathway; protein N(6)-(lipoyl)lysine from octanoyl-[acyl-carrier-protein]: step 1/2. In terms of biological role, catalyzes the transfer of endogenously produced octanoic acid from octanoyl-acyl-carrier-protein onto the lipoyl domains of lipoate-dependent enzymes. Lipoyl-ACP can also act as a substrate although octanoyl-ACP is likely to be the physiological substrate. The sequence is that of Octanoyltransferase, mitochondrial (LIP2) from Saccharomyces cerevisiae (strain ATCC 204508 / S288c) (Baker's yeast).